A 48-amino-acid polypeptide reads, in one-letter code: GIFPKIIGKGIKTGIVNGIKSLVKGVGMKVFKAGLNNIGNTGCNEDEC.

The cysteines at positions 43 and 48 are disulfide-linked.

Expressed by the skin glands.

Its subcellular location is the secreted. In terms of biological role, antimicrobial activity against Gram-negative bacterium E.coli. This chain is Palustrin-3a, found in Lithobates palustris (Pickerel frog).